The following is a 568-amino-acid chain: Potassium-transporting ATPase potassium-binding subunit (568 aa).

The next 12 helical transmembrane spans lie at 7–27, 65–85, 136–156, 179–199, 254–274, 285–305, 332–352, 354–374, 377–397, 423–443, 487–507, and 530–550; these read ITIG…GGFL, HYAL…YAIL, GLTV…AAII, LYVL…EGIP, LTNF…TNVF, WAVF…VYWA, FGVA…CGAV, AMHE…MMLG, IIGG…IAVF, MLAV…AVVV, ITLG…ALAI, and LFIG…FLPA.

The protein belongs to the KdpA family. In terms of assembly, the system is composed of three essential subunits: KdpA, KdpB and KdpC.

The protein resides in the cell inner membrane. Part of the high-affinity ATP-driven potassium transport (or Kdp) system, which catalyzes the hydrolysis of ATP coupled with the electrogenic transport of potassium into the cytoplasm. This subunit binds the periplasmic potassium ions and delivers the ions to the membrane domain of KdpB through an intramembrane tunnel. The sequence is that of Potassium-transporting ATPase potassium-binding subunit from Granulibacter bethesdensis (strain ATCC BAA-1260 / CGDNIH1).